The following is a 529-amino-acid chain: Bifunctional purine biosynthesis protein PurH (529 aa).

Positions 1 to 148 (MQQRRPVRRA…KNHRDVAIVV (148 aa)) constitute an MGS-like domain. K287 is modified (N6-acetyllysine).

This sequence belongs to the PurH family.

It carries out the reaction (6R)-10-formyltetrahydrofolate + 5-amino-1-(5-phospho-beta-D-ribosyl)imidazole-4-carboxamide = 5-formamido-1-(5-phospho-D-ribosyl)imidazole-4-carboxamide + (6S)-5,6,7,8-tetrahydrofolate. The enzyme catalyses IMP + H2O = 5-formamido-1-(5-phospho-D-ribosyl)imidazole-4-carboxamide. The protein operates within purine metabolism; IMP biosynthesis via de novo pathway; 5-formamido-1-(5-phospho-D-ribosyl)imidazole-4-carboxamide from 5-amino-1-(5-phospho-D-ribosyl)imidazole-4-carboxamide (10-formyl THF route): step 1/1. It functions in the pathway purine metabolism; IMP biosynthesis via de novo pathway; IMP from 5-formamido-1-(5-phospho-D-ribosyl)imidazole-4-carboxamide: step 1/1. This Escherichia coli O6:K15:H31 (strain 536 / UPEC) protein is Bifunctional purine biosynthesis protein PurH.